Reading from the N-terminus, the 153-residue chain is Pheromone-binding protein Gp-9 (153 aa).

Positions Met1 to Ala19 are cleaved as a signal peptide. Disulfide bonds link Cys37–Cys77, Cys73–Cys129, and Cys118–Cys138.

This sequence belongs to the PBP/GOBP family. In terms of assembly, homodimer.

The protein resides in the secreted. Colony queen number, a major feature of social organization, is associated with worker genotype for Gp-9. Colonies are headed by either a single reproductive queen (monogyne form) or multiple queens (polygyne form). Differences in worker Gp-9 genotypes between social forms may cause differences in workers' abilities to recognize queens and regulate their numbers. This chain is Pheromone-binding protein Gp-9, found in Solenopsis nigella gensterblumi (Fire ant).